A 2359-amino-acid polypeptide reads, in one-letter code: Pre-mRNA-processing-splicing factor 8B (2359 aa).

The interval 1–50 is disordered; the sequence is MWNIDGTSLAPPGTDGSRMQTPSHPADHPSYTAPSNRNTPTVPTPEDAEA. The segment covering 32-41 has biased composition (polar residues); it reads TAPSNRNTPT. One can recognise an MPN domain in the interval 2129–2260; the sequence is TYIMPKNILK…LTSYKLTQAG (132 aa).

Its subcellular location is the nucleus. In terms of biological role, functions as a scaffold that mediates the ordered assembly of spliceosomal proteins and snRNAs. Required for the assembly of the U4/U6-U5 tri-snRNP complex. In Arabidopsis thaliana (Mouse-ear cress), this protein is Pre-mRNA-processing-splicing factor 8B.